We begin with the raw amino-acid sequence, 66 residues long: Large ribosomal subunit protein uL29 (66 aa).

The protein belongs to the universal ribosomal protein uL29 family.

The polypeptide is Large ribosomal subunit protein uL29 (Francisella tularensis subsp. tularensis (strain FSC 198)).